We begin with the raw amino-acid sequence, 282 residues long: Large ribosomal subunit protein uL2 (282 aa).

The segment at alanine 230–lysine 282 is disordered. Positions arginine 265 to lysine 282 are enriched in basic residues.

Belongs to the universal ribosomal protein uL2 family. Part of the 50S ribosomal subunit. Forms a bridge to the 30S subunit in the 70S ribosome.

Functionally, one of the primary rRNA binding proteins. Required for association of the 30S and 50S subunits to form the 70S ribosome, for tRNA binding and peptide bond formation. It has been suggested to have peptidyltransferase activity; this is somewhat controversial. Makes several contacts with the 16S rRNA in the 70S ribosome. This chain is Large ribosomal subunit protein uL2, found in Desulfovibrio desulfuricans (strain ATCC 27774 / DSM 6949 / MB).